Here is a 933-residue protein sequence, read N- to C-terminus: Probable Rho-type GTPase-activating protein 4 (933 aa).

LIM zinc-binding domains lie at 22–80 (CFCI…LCVD) and 81–129 (ICNG…CLPC). Disordered stretches follow at residues 181 to 200 (PSSV…NSLR) and 304 to 338 (ENGT…STTT). The span at 325-338 (RSSTMNYKSVSTTT) shows a compositional bias: polar residues. Serine 353 is subject to Phosphoserine. Disordered regions lie at residues 415–435 (RLSS…NYEA), 605–628 (SSSF…SPRE), and 641–660 (GFRP…KRNS). Positions 619–628 (RTISTPSPRE) are enriched in polar residues. Serine 625 bears the Phosphoserine mark. A compositionally biased stretch (basic and acidic residues) spans 643-652 (RPKDNKDKES). Phosphoserine occurs at positions 738 and 740. In terms of domain architecture, Rho-GAP spans 753–932 (NRLTLLRVPT…FLIDHVHEVF (180 aa)).

In terms of biological role, GTPase-activating protein for Rho-type proteins. In Schizosaccharomyces pombe (strain 972 / ATCC 24843) (Fission yeast), this protein is Probable Rho-type GTPase-activating protein 4 (rga4).